The sequence spans 243 residues: Probable transcriptional regulatory protein BAPKO_0024/BafPKo_0025 (243 aa).

Belongs to the TACO1 family.

The protein localises to the cytoplasm. This is Probable transcriptional regulatory protein BAPKO_0024/BafPKo_0025 from Borreliella afzelii (strain PKo) (Borrelia afzelii).